The following is a 118-amino-acid chain: Small ribosomal subunit protein uS13 (118 aa).

The disordered stretch occupies residues 94–118; sequence GLPLRGQRTKTNARTRKGPRKPIRK.

Belongs to the universal ribosomal protein uS13 family. As to quaternary structure, part of the 30S ribosomal subunit. Forms a loose heterodimer with protein S19. Forms two bridges to the 50S subunit in the 70S ribosome.

Functionally, located at the top of the head of the 30S subunit, it contacts several helices of the 16S rRNA. In the 70S ribosome it contacts the 23S rRNA (bridge B1a) and protein L5 of the 50S subunit (bridge B1b), connecting the 2 subunits; these bridges are implicated in subunit movement. Contacts the tRNAs in the A and P-sites. The protein is Small ribosomal subunit protein uS13 of Chromohalobacter salexigens (strain ATCC BAA-138 / DSM 3043 / CIP 106854 / NCIMB 13768 / 1H11).